Reading from the N-terminus, the 171-residue chain is UPF0398 protein M6_Spy1399 (171 aa).

Belongs to the UPF0398 family.

The sequence is that of UPF0398 protein M6_Spy1399 from Streptococcus pyogenes serotype M6 (strain ATCC BAA-946 / MGAS10394).